A 490-amino-acid polypeptide reads, in one-letter code: Ent-kaurenoic acid oxidase 1 (490 aa).

A helical membrane pass occupies residues 6–26 (SWIPVWFPLMVLGCFGLNWLV). Cys439 is a binding site for heme.

Belongs to the cytochrome P450 family. The cofactor is heme. Widely expressed. Highly expressed in influorescence stem, influorescence, and silique tissue. Weakly expressed in cauline and rosette leaves. Expressed at a higher level in stem and influorescence than AtKAO2/CYP88A4.

It is found in the endoplasmic reticulum membrane. It carries out the reaction ent-kaur-16-en-19-oate + 3 reduced [NADPH--hemoprotein reductase] + 3 O2 = gibberellin A12 + 3 oxidized [NADPH--hemoprotein reductase] + 4 H2O + 4 H(+). The catalysed reaction is ent-kaur-16-en-19-oate + reduced [NADPH--hemoprotein reductase] + O2 = ent-7alpha-hydroxykaur-16-en-19-oate + oxidized [NADPH--hemoprotein reductase] + H2O + H(+). It catalyses the reaction ent-7alpha-hydroxykaur-16-en-19-oate + reduced [NADPH--hemoprotein reductase] + O2 = gibberellin A12 aldehyde + oxidized [NADPH--hemoprotein reductase] + 2 H2O + H(+). The enzyme catalyses gibberellin A12 aldehyde + reduced [NADPH--hemoprotein reductase] + O2 = gibberellin A12 + oxidized [NADPH--hemoprotein reductase] + H2O + 2 H(+). It participates in plant hormone biosynthesis; gibberellin biosynthesis. Its function is as follows. Catalyzes three successive oxidations of ent-kaurenoic acid giving gibberellin 12 (GA12), a key step in gibberellins (GAs) biosynthesis. GAs, which are involved many processes, including stem elongation, play a central role in plant development. This is Ent-kaurenoic acid oxidase 1 from Arabidopsis thaliana (Mouse-ear cress).